The following is a 121-amino-acid chain: Phosphoribosyl-ATP pyrophosphatase (121 aa).

Belongs to the PRA-PH family.

It localises to the cytoplasm. It carries out the reaction 1-(5-phospho-beta-D-ribosyl)-ATP + H2O = 1-(5-phospho-beta-D-ribosyl)-5'-AMP + diphosphate + H(+). It functions in the pathway amino-acid biosynthesis; L-histidine biosynthesis; L-histidine from 5-phospho-alpha-D-ribose 1-diphosphate: step 2/9. This is Phosphoribosyl-ATP pyrophosphatase from Burkholderia cenocepacia (strain HI2424).